A 125-amino-acid chain; its full sequence is Large ribosomal subunit protein bL20 (125 aa).

This sequence belongs to the bacterial ribosomal protein bL20 family.

Binds directly to 23S ribosomal RNA and is necessary for the in vitro assembly process of the 50S ribosomal subunit. It is not involved in the protein synthesizing functions of that subunit. This chain is Large ribosomal subunit protein bL20, found in Methylobacterium sp. (strain 4-46).